We begin with the raw amino-acid sequence, 361 residues long: Chorismate synthase (361 aa).

R48 and R54 together coordinate NADP(+). Residues 125–127, 238–239, G278, 293–297, and R319 each bind FMN; these read RSS, NA, and KPTSS.

This sequence belongs to the chorismate synthase family. As to quaternary structure, homotetramer. The cofactor is FMNH2.

The catalysed reaction is 5-O-(1-carboxyvinyl)-3-phosphoshikimate = chorismate + phosphate. Its pathway is metabolic intermediate biosynthesis; chorismate biosynthesis; chorismate from D-erythrose 4-phosphate and phosphoenolpyruvate: step 7/7. Catalyzes the anti-1,4-elimination of the C-3 phosphate and the C-6 proR hydrogen from 5-enolpyruvylshikimate-3-phosphate (EPSP) to yield chorismate, which is the branch point compound that serves as the starting substrate for the three terminal pathways of aromatic amino acid biosynthesis. This reaction introduces a second double bond into the aromatic ring system. This is Chorismate synthase from Escherichia coli O1:K1 / APEC.